The sequence spans 208 residues: FMN-dependent NADH:quinone oxidoreductase 1 (208 aa).

Residues Ser-10, 15–17, and 97–100 contribute to the FMN site; these read SES and MWNF.

This sequence belongs to the azoreductase type 1 family. Homodimer. FMN serves as cofactor.

The enzyme catalyses 2 a quinone + NADH + H(+) = 2 a 1,4-benzosemiquinone + NAD(+). The catalysed reaction is N,N-dimethyl-1,4-phenylenediamine + anthranilate + 2 NAD(+) = 2-(4-dimethylaminophenyl)diazenylbenzoate + 2 NADH + 2 H(+). Functionally, quinone reductase that provides resistance to thiol-specific stress caused by electrophilic quinones. Its function is as follows. Also exhibits azoreductase activity. Catalyzes the reductive cleavage of the azo bond in aromatic azo compounds to the corresponding amines. This Bradyrhizobium diazoefficiens (strain JCM 10833 / BCRC 13528 / IAM 13628 / NBRC 14792 / USDA 110) protein is FMN-dependent NADH:quinone oxidoreductase 1.